A 585-amino-acid chain; its full sequence is Mitochondrial translation ATP-dependent RNA helicase mrh5 (585 aa).

Residues 87-117 (PKFHELPLNQNILDGLSTNFAEYKNSTPLQQ) carry the Q motif motif. The Helicase ATP-binding domain maps to 121-351 (NALMKSGVSF…SRYITDQLGI (231 aa)). 134-141 (GWNGSGKS) is a binding site for ATP. Residues 261 to 264 (DESD) carry the DEAD box motif. One can recognise a Helicase C-terminal domain in the interval 390 to 584 (NLPYEFVRFN…PKSYEFDDEH (195 aa)).

This sequence belongs to the DEAD box helicase family. As to quaternary structure, component of the MRH5C complex, composed of mrh5, ppr4, mtf2, and sls1. Proteins mtf2 and sls1 form a subcomplex that serves as a scaffold to bring mrh5 and ppr4 together. The MRH5C complex associates with the small subunit of the mitochondrial ribosome.

Its subcellular location is the mitochondrion. It catalyses the reaction ATP + H2O = ADP + phosphate + H(+). Translation activation factor that as part of the MRH5C complex specifically recruits cox1 mRNA to the mitochondrial ribosome for translation initiation. The polypeptide is Mitochondrial translation ATP-dependent RNA helicase mrh5 (Schizosaccharomyces pombe (strain 972 / ATCC 24843) (Fission yeast)).